Here is a 229-residue protein sequence, read N- to C-terminus: UPF0173 metal-dependent hydrolase SAR1785 (229 aa).

Belongs to the UPF0173 family.

This Staphylococcus aureus (strain MRSA252) protein is UPF0173 metal-dependent hydrolase SAR1785.